The following is a 188-amino-acid chain: Peptidyl-tRNA hydrolase (188 aa).

Tyr14 contacts tRNA. His19 functions as the Proton acceptor in the catalytic mechanism. TRNA is bound by residues Tyr60 and Asn62.

This sequence belongs to the PTH family. As to quaternary structure, monomer.

The protein localises to the cytoplasm. The catalysed reaction is an N-acyl-L-alpha-aminoacyl-tRNA + H2O = an N-acyl-L-amino acid + a tRNA + H(+). Hydrolyzes ribosome-free peptidyl-tRNAs (with 1 or more amino acids incorporated), which drop off the ribosome during protein synthesis, or as a result of ribosome stalling. In terms of biological role, catalyzes the release of premature peptidyl moieties from peptidyl-tRNA molecules trapped in stalled 50S ribosomal subunits, and thus maintains levels of free tRNAs and 50S ribosomes. This Mycoplasmopsis agalactiae (strain NCTC 10123 / CIP 59.7 / PG2) (Mycoplasma agalactiae) protein is Peptidyl-tRNA hydrolase.